A 501-amino-acid polypeptide reads, in one-letter code: Glycogenin-2 (501 aa).

UDP is bound by residues Leu-42, Thr-44, Asn-45, Tyr-48, and Arg-110. The UDP-alpha-D-glucose site is built by Leu-42, Thr-44, Asn-45, Tyr-48, Arg-110, Lys-119, Asp-135, Ala-136, Asp-137, Asn-166, Ser-167, Asp-193, Asp-196, and Gln-197. The UDP site is built by Asp-135, Ala-136, and Asp-137. Residue Asp-135 coordinates Mn(2+). Asp-137 serves as a coordination point for Mn(2+). Residue Tyr-228 is glycosylated (O-linked (Glc...) tyrosine). 3 residues coordinate UDP: His-245, Gly-248, and Lys-251. His-245 is a Mn(2+) binding site. Residues Gly-248 and Lys-251 each coordinate UDP-alpha-D-glucose. 3 positions are modified to phosphoserine: Ser-368, Ser-399, and Ser-459.

In terms of assembly, homodimer, tightly complexed to glycogen synthase. The cofactor is Mn(2+). In terms of processing, self-glycosylated by the transfer of glucose residues from UDP-glucose to itself, forming an alpha-1,4-glycan of around 10 residues attached to Tyr-228. Detected in liver (at protein level). Expressed preferentially in liver, heart, and pancreas.

It localises to the cytoplasm. Its subcellular location is the nucleus. The catalysed reaction is L-tyrosyl-[glycogenin] + UDP-alpha-D-glucose = alpha-D-glucosyl-L-tyrosyl-[glycogenin] + UDP + H(+). The enzyme catalyses [1,4-alpha-D-glucosyl](n)-L-tyrosyl-[glycogenin] + UDP-alpha-D-glucose = [1,4-alpha-D-glucosyl](n+1)-L-tyrosyl-[glycogenin] + UDP + H(+). It participates in glycan biosynthesis; glycogen biosynthesis. Its function is as follows. Glycogenin participates in the glycogen biosynthetic process along with glycogen synthase and glycogen branching enzyme. It catalyzes the formation of a short alpha (1,4)-glucosyl chain covalently attached via a glucose 1-O-tyrosyl linkage to internal tyrosine residues and these chains act as primers for the elongation reaction catalyzed by glycogen synthase. This is Glycogenin-2 (GYG2) from Homo sapiens (Human).